An 82-amino-acid polypeptide reads, in one-letter code: Defensin-like protein 275 (82 aa).

A signal peptide spans 1-23; sequence MALSKFQLVALLITYTLLFSCQS. Cystine bridges form between cysteine 36-cysteine 78, cysteine 42-cysteine 65, cysteine 48-cysteine 76, and cysteine 52-cysteine 77.

The protein belongs to the DEFL family.

It is found in the secreted. The sequence is that of Defensin-like protein 275 from Arabidopsis thaliana (Mouse-ear cress).